The chain runs to 189 residues: Stathmin-4 (189 aa).

Residues cysteine 20 and cysteine 22 are each lipidated (S-palmitoyl cysteine). An SLD domain is found at 48 to 189 (SDMEVIELNK…NKELKEEASR (142 aa)). Serine 90 is modified (phosphoserine). The stretch at 90-188 (SLEEIQKKLE…KNKELKEEAS (99 aa)) forms a coiled coil. The interval 168-189 (QEKDKHAEEVRKNKELKEEASR) is disordered.

Belongs to the stathmin family.

The protein localises to the golgi apparatus. It is found in the cell projection. It localises to the growth cone. The protein resides in the axon. Exhibits microtubule-destabilizing activity. The chain is Stathmin-4 (STMN4) from Homo sapiens (Human).